Consider the following 212-residue polypeptide: MEKKKGISMAVIKRLPKYHRYLQELMENDIDRISSKELSEKIGFTASQIRQDLNCFGDFGQQGYGYNVKELYNNIGNILGLTRDYNTVIIGAGNIGQAIANYNSFNRLGFKLKGIFDANPRMFGIKIRDIEIQDVEKLKDFVKENDIEIGIICVPRTNAQKVCNELVEGGIKGIWNFAPIDLDVPKDIRVENVHLSESMMTLVYLLNHNDVK.

Positions 17–56 (KYHRYLQELMENDIDRISSKELSEKIGFTASQIRQDLNCF) form a DNA-binding region, H-T-H motif. Position 91 to 96 (91 to 96 (GAGNIG)) interacts with NAD(+).

It belongs to the transcriptional regulatory Rex family. In terms of assembly, homodimer.

It localises to the cytoplasm. Functionally, modulates transcription in response to changes in cellular NADH/NAD(+) redox state. In Clostridium perfringens (strain SM101 / Type A), this protein is Redox-sensing transcriptional repressor Rex.